A 524-amino-acid chain; its full sequence is Serine/threonine-protein kinase PAK 2 (524 aa).

The tract at residues Met1–Glu81 is disordered. N-acetylserine is present on Ser2. Ser2, Ser20, Ser55, and Ser58 each carry phosphoserine. Phosphothreonine is present on Thr60. Lys62 carries the post-translational modification N6-acetyllysine. Ser64 bears the Phosphoserine mark. Positions Lys67–Glu81 are enriched in basic and acidic residues. Residues Lys69–Thr112 are GTPase-binding. Residues Lys69–Gln137 form an autoregulatory region region. A CRIB domain is found at Ile74–Gly87. Residue Lys128 is modified to N6-acetyllysine. Thr134 carries the phosphothreonine modification. At Tyr139 the chain carries Phosphotyrosine. Ser141 is subject to Phosphoserine. The disordered stretch occupies residues Phe142 to Asp188. The residue at position 143 (Thr143) is a Phosphothreonine. A Phosphoserine modification is found at Ser152. 3 positions are modified to phosphothreonine: Thr154, Thr159, and Thr169. The span at Pro155–Val167 shows a compositional bias: polar residues. Over residues Thr169 to Ala178 the composition is skewed to acidic residues. Ser197 bears the Phosphoserine mark. The segment at Ala204–Thr228 is disordered. The Nuclear localization signal motif lies at Pro245–Arg251. Residues Tyr249–Phe499 enclose the Protein kinase domain. Residues Ile255–Val263 and Lys278 contribute to the ATP site. Residue Arg367 is the Proton acceptor of the active site. A Phosphothreonine; by autocatalysis modification is found at Thr402.

The protein belongs to the protein kinase superfamily. STE Ser/Thr protein kinase family. STE20 subfamily. Interacts tightly with GTP-bound but not GDP-bound CDC42/p21 and RAC1. Interacts with SH3MD4. Interacts with SCRIB. Interacts with ARHGEF7 and GIT1. PAK-2p34 interacts with ARHGAP10. Interacts with RAC1. Post-translationally, full-length PAK2 is autophosphorylated when activated by CDC42/p21. Following cleavage, both peptides, PAK-2p27 and PAK-2p34, become highly autophosphorylated. Autophosphorylation of PAK-2p27 can occur in the absence of any effectors and is dependent on phosphorylation of Thr-402, because PAK-2p27 is acting as an exogenous substrate. During apoptosis proteolytically cleaved by caspase-3 or caspase-3-like proteases to yield active PAK-2p34. In terms of processing, ubiquitinated, leading to its proteasomal degradation.

The protein resides in the cytoplasm. The protein localises to the nucleus. It is found in the perinuclear region. It localises to the membrane. The enzyme catalyses L-seryl-[protein] + ATP = O-phospho-L-seryl-[protein] + ADP + H(+). It catalyses the reaction L-threonyl-[protein] + ATP = O-phospho-L-threonyl-[protein] + ADP + H(+). Its activity is regulated as follows. Activated by binding small G proteins. Binding of GTP-bound CDC42 or RAC1 to the autoregulatory region releases monomers from the autoinhibited dimer, enables phosphorylation of Thr-402 and allows the kinase domain to adopt an active structure. Following caspase cleavage, autophosphorylated PAK-2p34 is constitutively active. In terms of biological role, serine/threonine protein kinase that plays a role in a variety of different signaling pathways including cytoskeleton regulation, cell motility, cell cycle progression, apoptosis or proliferation. Acts as a downstream effector of the small GTPases CDC42 and RAC1. Activation by the binding of active CDC42 and RAC1 results in a conformational change and a subsequent autophosphorylation on several serine and/or threonine residues. Full-length PAK2 stimulates cell survival and cell growth. Phosphorylates MAPK4 and MAPK6 and activates the downstream target MAPKAPK5, a regulator of F-actin polymerization and cell migration. Phosphorylates JUN and plays an important role in EGF-induced cell proliferation. Phosphorylates many other substrates including histone H4 to promote assembly of H3.3 and H4 into nucleosomes, BAD, ribosomal protein S6, or MBP. Phosphorylates CASP7, thereby preventing its activity. Additionally, associates with ARHGEF7 and GIT1 to perform kinase-independent functions such as spindle orientation control during mitosis. On the other hand, apoptotic stimuli such as DNA damage lead to caspase-mediated cleavage of PAK2, generating PAK-2p34, an active p34 fragment that translocates to the nucleus and promotes cellular apoptosis involving the JNK signaling pathway. Caspase-activated PAK2 phosphorylates MKNK1 and reduces cellular translation. The sequence is that of Serine/threonine-protein kinase PAK 2 (Pak2) from Mus musculus (Mouse).